Here is a 513-residue protein sequence, read N- to C-terminus: uncharacterized protein (513 aa).

The span at methionine 1 to arginine 16 shows a compositional bias: basic and acidic residues. Residues methionine 1–glutamate 21 are disordered.

This is an uncharacterized protein from Sinorhizobium fredii (strain NBRC 101917 / NGR234).